A 555-amino-acid polypeptide reads, in one-letter code: ATP-dependent RNA helicase MRH4, mitochondrial (555 aa).

A mitochondrion-targeting transit peptide spans 1-25; that stretch reads MFKLLIPNKYNYVIRPLVRFKSIKS. Positions 101 to 108 match the Q motif motif; the sequence is DIKPTPVQ. A Helicase ATP-binding domain is found at 144–361; the sequence is ANEIQKTKVF…SKLFPDQRSL (218 aa). ATP is bound at residue 157-164; that stretch reads AETGSGKT. The DEAD box signature appears at 309-312; sequence DEAD. One can recognise a Helicase C-terminal domain in the interval 395–555; sequence CLAQALYAIS…NAIIRGLRIG (161 aa).

The protein belongs to the DEAD box helicase family. MRH4 subfamily.

The protein localises to the mitochondrion. The enzyme catalyses ATP + H2O = ADP + phosphate + H(+). In terms of biological role, ATP-binding RNA helicase involved in mitochondrial RNA metabolism. Required for maintenance of mitochondrial DNA. The polypeptide is ATP-dependent RNA helicase MRH4, mitochondrial (MRH4) (Candida albicans (strain SC5314 / ATCC MYA-2876) (Yeast)).